The sequence spans 179 residues: Large ribosomal subunit protein uL5 (179 aa).

It belongs to the universal ribosomal protein uL5 family. In terms of assembly, part of the 50S ribosomal subunit; part of the 5S rRNA/L5/L18/L25 subcomplex. Contacts the 5S rRNA and the P site tRNA. Forms a bridge to the 30S subunit in the 70S ribosome.

Functionally, this is one of the proteins that bind and probably mediate the attachment of the 5S RNA into the large ribosomal subunit, where it forms part of the central protuberance. In the 70S ribosome it contacts protein S13 of the 30S subunit (bridge B1b), connecting the 2 subunits; this bridge is implicated in subunit movement. Contacts the P site tRNA; the 5S rRNA and some of its associated proteins might help stabilize positioning of ribosome-bound tRNAs. The protein is Large ribosomal subunit protein uL5 of Neisseria meningitidis serogroup A / serotype 4A (strain DSM 15465 / Z2491).